A 137-amino-acid polypeptide reads, in one-letter code: Large ribosomal subunit protein uL16 (137 aa).

Belongs to the universal ribosomal protein uL16 family. In terms of assembly, part of the 50S ribosomal subunit.

Functionally, binds 23S rRNA and is also seen to make contacts with the A and possibly P site tRNAs. This chain is Large ribosomal subunit protein uL16, found in Bartonella bacilliformis (strain ATCC 35685 / KC583 / Herrer 020/F12,63).